The primary structure comprises 236 residues: MATMETTTQKDTNILKSGLKKTIGVLNEAVLQNGREVEAVQAGNSDTMEDTETTTIGYISIKDYAYADSNPLHYGYFDGDNEEDEMVSDSSNGEDTYNKRQSITLPDDYIVNQRAVALYDFEPENDNELRLAEGDIVFISYKHGQGWLVAENESGSKTGLVPEEFVSYIQPEDGENEVENKARPFYLTHLITQSVSPKNNIDNTNEDEYDDNDEWEDIDDVAEVEADMKTKLDISD.

Ser102 is subject to Phosphoserine. One can recognise an SH3 domain in the interval 110–171 (IVNQRAVALY…PEEFVSYIQP (62 aa)). Ser196 and Ser235 each carry phosphoserine.

As to quaternary structure, interacts with PBS2 and PTC1.

It localises to the cytoplasm. Negatively regulates the high-osmolarity glycerol (HOG) pathway through its negative regulation of the HOG1 kinase activity. Mediates the binding between the PTC1 phosphatase and the PBS2 MAP/ERK kinase (MEK). With PTC1, regulates endoplasmic reticulum inheritance through the cell wall integrity (CWI) MAPK pathway by modulating the MAPK, SLT2. In Saccharomyces cerevisiae (strain ATCC 204508 / S288c) (Baker's yeast), this protein is NAP1-binding protein 2 (NBP2).